A 113-amino-acid polypeptide reads, in one-letter code: Mitochondrial import inner membrane translocase subunit PAM16 like 1 (113 aa).

The transit peptide at 1 to 48 (MAARVLASVIVMGSGIIARACTQAYRQALANASKTGVAHEATQTIKRG) directs the protein to the mitochondrion. A J-like region spans residues 55-104 (EARQILGVTEKSSWDEILKKYDTLFERNAQNGSFYLQSKVHRAKECLETA).

The protein belongs to the TIM16/PAM16 family. Expressed at low levels in seedlings, rosettes and inflorescence.

It localises to the mitochondrion inner membrane. Regulates ATP-dependent protein translocation into the mitochondrial matrix. The sequence is that of Mitochondrial import inner membrane translocase subunit PAM16 like 1 from Arabidopsis thaliana (Mouse-ear cress).